The sequence spans 456 residues: tRNA-2-methylthio-N(6)-dimethylallyladenosine synthase (456 aa).

Positions 19-137 (KHFFIETWGC…FPEYLHRVQV (119 aa)) constitute an MTTase N-terminal domain. [4Fe-4S] cluster contacts are provided by Cys-28, Cys-64, Cys-98, Cys-174, Cys-178, and Cys-181. The 233-residue stretch at 160–392 (RKSNVKAFVT…AVNEGIVVGN (233 aa)) folds into the Radical SAM core domain. The region spanning 393–456 (KAAEGKIYEV…SFSLVGEVVE (64 aa)) is the TRAM domain.

Belongs to the methylthiotransferase family. MiaB subfamily. As to quaternary structure, monomer. It depends on [4Fe-4S] cluster as a cofactor.

It is found in the cytoplasm. It carries out the reaction N(6)-dimethylallyladenosine(37) in tRNA + (sulfur carrier)-SH + AH2 + 2 S-adenosyl-L-methionine = 2-methylsulfanyl-N(6)-dimethylallyladenosine(37) in tRNA + (sulfur carrier)-H + 5'-deoxyadenosine + L-methionine + A + S-adenosyl-L-homocysteine + 2 H(+). Its function is as follows. Catalyzes the methylthiolation of N6-(dimethylallyl)adenosine (i(6)A), leading to the formation of 2-methylthio-N6-(dimethylallyl)adenosine (ms(2)i(6)A) at position 37 in tRNAs that read codons beginning with uridine. This Clostridium botulinum (strain Eklund 17B / Type B) protein is tRNA-2-methylthio-N(6)-dimethylallyladenosine synthase.